We begin with the raw amino-acid sequence, 485 residues long: MTHWIAGEWVAGTGEKLESHTPYSHELLWQGYSASGEQVDAAVKAARRAFLDWKKRPFAEREQKVLAFAELVKANSEQIAQVIAKETGKPLWETRTEAASIAGKIAISIRAYHERTGETVREAAGNQLVLRHRPLGVMAVFGPYNFPGHLPNGHIVPALLAGNTVVFKPSEQTPWTGEVLMQLWQQAGLPAGVINLVQGSKETGIALAQSRGIDGLLFTGSANTGHLLHRQFAGQPDKMLALEMGGNNPMVISEHYGDLDATVYTIIQSAFISSGQRCTCVRRLYVPQGTKGDALLDKLVSVTAKLRIDQPFAEPAPFMGPLVSEAAAQAILKAQADLQALGGKSLLEARALHAAFITPAIIDVTAIERLPDDEYFGPLLQVVRYQTLAQAVELANDTRFGLSAGLVSTDDGEWDYFVEHIRAGIVNRNRQLTGASGDAPFGGPGASGNLRPSAFYAADYCAYPMASMEGDTTLLPATLSPGVEL.

220 to 225 (GSANTG) serves as a coordination point for NAD(+). Residues Glu-243 and Cys-278 contribute to the active site.

The protein belongs to the aldehyde dehydrogenase family. AstD subfamily.

It catalyses the reaction N-succinyl-L-glutamate 5-semialdehyde + NAD(+) + H2O = N-succinyl-L-glutamate + NADH + 2 H(+). Its pathway is amino-acid degradation; L-arginine degradation via AST pathway; L-glutamate and succinate from L-arginine: step 4/5. In terms of biological role, catalyzes the NAD-dependent reduction of succinylglutamate semialdehyde into succinylglutamate. In Vibrio cholerae serotype O1 (strain ATCC 39541 / Classical Ogawa 395 / O395), this protein is N-succinylglutamate 5-semialdehyde dehydrogenase.